Consider the following 61-residue polypeptide: Photosystem II reaction center protein K (61 aa).

The propeptide occupies 1-24 (MLNTFSLIGICLNSTLFSSSFFFG). The chain crosses the membrane as a helical span at residues 36–56 (IVDIMPVIPLFFFLLAFVWQA).

It belongs to the PsbK family. In terms of assembly, PSII is composed of 1 copy each of membrane proteins PsbA, PsbB, PsbC, PsbD, PsbE, PsbF, PsbH, PsbI, PsbJ, PsbK, PsbL, PsbM, PsbT, PsbX, PsbY, PsbZ, Psb30/Ycf12, at least 3 peripheral proteins of the oxygen-evolving complex and a large number of cofactors. It forms dimeric complexes.

The protein resides in the plastid. Its subcellular location is the chloroplast thylakoid membrane. Functionally, one of the components of the core complex of photosystem II (PSII). PSII is a light-driven water:plastoquinone oxidoreductase that uses light energy to abstract electrons from H(2)O, generating O(2) and a proton gradient subsequently used for ATP formation. It consists of a core antenna complex that captures photons, and an electron transfer chain that converts photonic excitation into a charge separation. The chain is Photosystem II reaction center protein K from Nicotiana tomentosiformis (Tobacco).